Reading from the N-terminus, the 283-residue chain is Protein/nucleic acid deglycase HchA (283 aa).

Zn(2+)-binding residues include histidine 86, glutamate 91, and histidine 123. The active-site Nucleophile is the cysteine 185.

Belongs to the peptidase C56 family. HchA subfamily. Homodimer.

It is found in the cytoplasm. It carries out the reaction N(omega)-(1-hydroxy-2-oxopropyl)-L-arginyl-[protein] + H2O = lactate + L-arginyl-[protein] + H(+). The catalysed reaction is N(6)-(1-hydroxy-2-oxopropyl)-L-lysyl-[protein] + H2O = lactate + L-lysyl-[protein] + H(+). It catalyses the reaction S-(1-hydroxy-2-oxopropyl)-L-cysteinyl-[protein] + H2O = lactate + L-cysteinyl-[protein] + H(+). The enzyme catalyses N(omega)-(1-hydroxy-2-oxoethyl)-L-arginyl-[protein] + H2O = L-arginyl-[protein] + glycolate + H(+). It carries out the reaction N(6)-(1-hydroxy-2-oxoethyl)-L-lysyl-[protein] + H2O = glycolate + L-lysyl-[protein] + H(+). The catalysed reaction is S-(1-hydroxy-2-oxoethyl)-L-cysteinyl-[protein] + H2O = glycolate + L-cysteinyl-[protein] + H(+). It catalyses the reaction N(2)-(1-hydroxy-2-oxopropyl)-dGTP + H2O = lactate + dGTP + H(+). The enzyme catalyses N(2)-(1-hydroxy-2-oxopropyl)-GTP + H2O = lactate + GTP + H(+). It carries out the reaction N(2)-(1-hydroxy-2-oxopropyl)-GDP + H2O = lactate + GDP + H(+). The catalysed reaction is N(2)-(1-hydroxy-2-oxopropyl)-GMP + H2O = lactate + GMP + H(+). It catalyses the reaction N(2)-(1-hydroxy-2-oxoethyl)-dGTP + H2O = dGTP + glycolate + H(+). The enzyme catalyses N(2)-(1-hydroxy-2-oxoethyl)-GTP + H2O = glycolate + GTP + H(+). It carries out the reaction N(2)-(1-hydroxy-2-oxoethyl)-GDP + H2O = glycolate + GDP + H(+). The catalysed reaction is N(2)-(1-hydroxy-2-oxoethyl)-GMP + H2O = glycolate + GMP + H(+). It catalyses the reaction an N(2)-(1-hydroxy-2-oxopropyl)-guanosine in RNA + H2O = a guanosine in RNA + lactate + H(+). The enzyme catalyses an N(2)-(1-hydroxy-2-oxopropyl)-2'-deoxyguanosine in DNA + H2O = a 2'-deoxyguanosine in DNA + lactate + H(+). It carries out the reaction an N(2)-(1-hydroxy-2-oxoethyl)-guanosine in RNA + H2O = a guanosine in RNA + glycolate + H(+). The catalysed reaction is an N(2)-(1-hydroxy-2-oxoethyl)-2'-deoxyguanosine in DNA + H2O = a 2'-deoxyguanosine in DNA + glycolate + H(+). In terms of biological role, protein and nucleotide deglycase that catalyzes the deglycation of the Maillard adducts formed between amino groups of proteins or nucleotides and reactive carbonyl groups of glyoxals. Thus, functions as a protein deglycase that repairs methylglyoxal- and glyoxal-glycated proteins, and releases repaired proteins and lactate or glycolate, respectively. Deglycates cysteine, arginine and lysine residues in proteins, and thus reactivates these proteins by reversing glycation by glyoxals. Acts on early glycation intermediates (hemithioacetals and aminocarbinols), preventing the formation of Schiff bases and advanced glycation endproducts (AGE). Also functions as a nucleotide deglycase able to repair glycated guanine in the free nucleotide pool (GTP, GDP, GMP, dGTP) and in DNA and RNA. Is thus involved in a major nucleotide repair system named guanine glycation repair (GG repair), dedicated to reversing methylglyoxal and glyoxal damage via nucleotide sanitization and direct nucleic acid repair. Plays an important role in protecting cells from carbonyl stress. In Shigella sonnei (strain Ss046), this protein is Protein/nucleic acid deglycase HchA.